The sequence spans 161 residues: Cyclic pyranopterin monophosphate synthase (161 aa).

Substrate is bound by residues 75–77 (LCH) and 113–114 (ME). Asp128 is an active-site residue.

It belongs to the MoaC family. In terms of assembly, homohexamer; trimer of dimers.

It catalyses the reaction (8S)-3',8-cyclo-7,8-dihydroguanosine 5'-triphosphate = cyclic pyranopterin phosphate + diphosphate. Its pathway is cofactor biosynthesis; molybdopterin biosynthesis. Functionally, catalyzes the conversion of (8S)-3',8-cyclo-7,8-dihydroguanosine 5'-triphosphate to cyclic pyranopterin monophosphate (cPMP). The chain is Cyclic pyranopterin monophosphate synthase from Escherichia coli O139:H28 (strain E24377A / ETEC).